A 342-amino-acid polypeptide reads, in one-letter code: Antihemorrhagic factor cHLP-B (342 aa).

The first 19 residues, 1–19, serve as a signal peptide directing secretion; sequence MNSLVALVLLGQMIGSTLS. 2 consecutive Cystatin fetuin-A-type domains span residues 20–129 and 140–253; these read HHLQ…AKCH and RNCP…SDCV. 6 disulfide bridges follow: C28/C333, C85/C96, C110/C128, C142/C145, C204/C216, and C229/C252. Residue N95 is glycosylated (N-linked (GlcNAc...) asparagine). N203 is a glycosylation site (N-linked (GlcNAc...) asparagine). N-linked (GlcNAc...) asparagine glycans are attached at residues N281 and N292.

It belongs to the fetuin family. In terms of assembly, homodimer. In terms of tissue distribution, expressed by the liver.

It localises to the secreted. Its function is as follows. Potent inhibitor of hemorrhagic activity but also proteolytic activities. Inhibition occurs by formation of a non-covalent complex between this protein and the proteinases at their metalloproteinase domains. This is Antihemorrhagic factor cHLP-B from Gloydius brevicauda (Korean slamosa snake).